A 517-amino-acid chain; its full sequence is Argininosuccinate lyase, chloroplastic (517 aa).

The transit peptide at 1-45 directs the protein to the chloroplast; the sequence is MGAIDLSFSQSLLFSSSRSNLSSSTHRSVSFLPPGSKSRCLPPLR. Positions 79, 166, and 211 each coordinate 2-(N(omega)-L-arginino)succinate. Histidine 212 functions as the Proton acceptor in the catalytic mechanism. Serine 333 (proton donor) is an active-site residue. Residues asparagine 341, tyrosine 373, glutamine 378, and lysine 381 each contribute to the 2-(N(omega)-L-arginino)succinate site.

Belongs to the lyase 1 family. Argininosuccinate lyase subfamily.

It is found in the plastid. The protein localises to the chloroplast. The catalysed reaction is 2-(N(omega)-L-arginino)succinate = fumarate + L-arginine. It participates in amino-acid biosynthesis; L-arginine biosynthesis; L-arginine from L-ornithine and carbamoyl phosphate: step 3/3. The polypeptide is Argininosuccinate lyase, chloroplastic (Arabidopsis thaliana (Mouse-ear cress)).